The chain runs to 919 residues: Isoleucine--tRNA ligase (919 aa).

The 'HIGH' region signature appears at 59–69 (PYANGHLHIGH). E570 provides a ligand contact to L-isoleucyl-5'-AMP. The 'KMSKS' region signature appears at 611–615 (KMSKS). K614 is an ATP binding site. 4 residues coordinate Zn(2+): C893, C896, C908, and C911.

This sequence belongs to the class-I aminoacyl-tRNA synthetase family. IleS type 1 subfamily. In terms of assembly, monomer. Zn(2+) serves as cofactor.

The protein resides in the cytoplasm. It catalyses the reaction tRNA(Ile) + L-isoleucine + ATP = L-isoleucyl-tRNA(Ile) + AMP + diphosphate. Catalyzes the attachment of isoleucine to tRNA(Ile). As IleRS can inadvertently accommodate and process structurally similar amino acids such as valine, to avoid such errors it has two additional distinct tRNA(Ile)-dependent editing activities. One activity is designated as 'pretransfer' editing and involves the hydrolysis of activated Val-AMP. The other activity is designated 'posttransfer' editing and involves deacylation of mischarged Val-tRNA(Ile). The polypeptide is Isoleucine--tRNA ligase (Campylobacter curvus (strain 525.92)).